Consider the following 182-residue polypeptide: Probable RNA 2'-phosphotransferase (182 aa).

It belongs to the KptA/TPT1 family.

Its function is as follows. Removes the 2'-phosphate from RNA via an intermediate in which the phosphate is ADP-ribosylated by NAD followed by a presumed transesterification to release the RNA and generate ADP-ribose 1''-2''-cyclic phosphate (APPR&gt;P). May function as an ADP-ribosylase. This is Probable RNA 2'-phosphotransferase from Pseudomonas fluorescens (strain ATCC BAA-477 / NRRL B-23932 / Pf-5).